A 621-amino-acid chain; its full sequence is Pentatricopeptide repeat-containing protein At3g48250, chloroplastic (621 aa).

Residues 1–67 (MYRSMAILSS…SKPDSMLQLV (67 aa)) constitute a chloroplast transit peptide. 10 PPR repeats span residues 122–156 (STPL…GFYL), 157–194 (DEDT…NAMS), 262–296 (STVT…GYDM), 297–331 (DLDT…PFKP), 332–368 (SIQD…GKSL), 369–403 (SKAV…GYEP), 404–438 (DNIT…GCFP), 439–473 (DIKT…GFDI), 474–509 (DSNL…NVKP), and 510–544 (WQST…NYPA).

It belongs to the PPR family. P subfamily.

The protein resides in the plastid. Its subcellular location is the chloroplast. This chain is Pentatricopeptide repeat-containing protein At3g48250, chloroplastic, found in Arabidopsis thaliana (Mouse-ear cress).